The following is a 634-amino-acid chain: E3 ubiquitin/ISG15 ligase TRIM25 (634 aa).

An RING-type zinc finger spans residues 13-54 (CSVCLELFKEPVTTPCGHNFCMSCLDETWVVQGPPYRCPQCR). At Thr-90 the chain carries Phosphothreonine. Ser-99 carries the post-translational modification Phosphoserine. Lys-116 is covalently cross-linked (Glycyl lysine isopeptide (Lys-Gly) (interchain with G-Cter in ISG15)). Positions 215 to 305 (ATKALEDVRS…LIMDKGDEFE (91 aa)) form a coiled coil. Lys-272 is modified (N6-acetyllysine). At Tyr-277 the chain carries Phosphotyrosine. The segment at 353–437 (KLQKKSEEHN…APKASAAQPD (85 aa)) is disordered. Polar residues predominate over residues 363–376 (GSGNKGDQTQSTFK). A B30.2/SPRY domain is found at 444 to 634 (KVLENFLTKS…AGTTLSICSK (191 aa)). An N6-acetyllysine modification is found at Lys-572.

In terms of assembly, forms homodimers. Interacts (via SPRY domain) with RIGI (via CARD domain). Interacts with ZFHX3. Interacts with NLRP12; this interaction reduces the E3 ubiquitin ligase TRIM25-mediated 'Lys-63'-linked RIGI activation. Interacts with the KHDC3L/FILIA-OOEP/FLOPED scaffold complex and BLM at DNA replication forks. Interacts with RTN3; this interaction prevents RIGI ubiquitination. Interacts with YWHAE. Post-translationally, auto-ISGylated. In terms of tissue distribution, ubiquitous.

It localises to the cytoplasm. The protein localises to the stress granule. It is found in the nucleus. The catalysed reaction is S-ubiquitinyl-[E2 ubiquitin-conjugating enzyme]-L-cysteine + [acceptor protein]-L-lysine = [E2 ubiquitin-conjugating enzyme]-L-cysteine + N(6)-ubiquitinyl-[acceptor protein]-L-lysine.. It carries out the reaction ATP + [ISG15] + [protein]-lysine = AMP + diphosphate + [protein]-N-ISGyllysine.. It functions in the pathway protein modification; protein ubiquitination. Functionally, functions as a ubiquitin E3 ligase and as an ISG15 E3 ligase. Involved in innate immune defense against viruses by mediating ubiquitination of RIGI and IFIH1. Mediates 'Lys-63'-linked polyubiquitination of the RIGI N-terminal CARD-like region and may play a role in signal transduction that leads to the production of interferons in response to viral infection. Mediates 'Lys-63'-linked polyubiquitination of IFIH1. Promotes ISGylation of 14-3-3 sigma (SFN), an adapter protein implicated in the regulation of a large spectrum signaling pathway. Mediates estrogen action in various target organs. Mediates the ubiquitination and subsequent proteasomal degradation of ZFHX3. Plays a role in promoting the restart of stalled replication forks via interaction with the KHDC3L-OOEP scaffold and subsequent ubiquitination of BLM, resulting in the recruitment and retainment of BLM at DNA replication forks. Plays an essential role in the antiviral activity of ZAP/ZC3HAV1; an antiviral protein which inhibits the replication of certain viruses. Mechanistically, mediates 'Lys-63'-linked polyubiquitination of ZAP/ZC3HAV1 that is required for its optimal binding to target mRNA. Also mediates the ubiquitination of various substrates implicated in stress granule formation, nonsense-mediated mRNA decay, nucleoside synthesis and mRNA translation and stability. This Mus musculus (Mouse) protein is E3 ubiquitin/ISG15 ligase TRIM25 (Trim25).